Reading from the N-terminus, the 162-residue chain is MYVELVDETGQVPSEIIEQTKEVLAFAAKKLNLKESTEMSVTFVDNARSHELNLQYRETDRPTDVISLEYKPDESEFFFDEDMELPEELLEEMDPFIGELFISIDKAAEQAADYGHSIEREYGWLAVHGFLHINGYDHYTPEEESEMFGLQEEILTAYGLTR.

Positions 128, 132, and 138 each coordinate Zn(2+).

It belongs to the endoribonuclease YbeY family. It depends on Zn(2+) as a cofactor.

Its subcellular location is the cytoplasm. Single strand-specific metallo-endoribonuclease involved in late-stage 70S ribosome quality control and in maturation of the 3' terminus of the 16S rRNA. This Lactococcus lactis subsp. lactis (strain IL1403) (Streptococcus lactis) protein is Endoribonuclease YbeY.